A 64-amino-acid polypeptide reads, in one-letter code: Temporin-ALg (64 aa).

The signal sequence occupies residues 1-22 (MFTLKKSLLLLFFLGTINLSLC). A propeptide spanning residues 23–46 (EQERNAEEERRDDLGERQAEVEKR) is cleaved from the precursor. Residue leucine 62 is modified to Leucine amide.

Belongs to the frog skin active peptide (FSAP) family. Temporin subfamily. Expressed by the skin glands.

It localises to the secreted. Its function is as follows. Antimicrobial peptide with activity against Gram-positive and Gram-negative bacteria and against fungi. Has been tested against S.aureus (MIC=2.5 ug/mL), B.pumilus (MIC=2.5 ug/mL), B.cereus (MIC=30.0 ug/mL), E.coli (MIC=5.0 ug/mL), B.dysenteriae (MIC=10.0 ug/mL), A.cacoaceticus (MIC=30.0 ug/mL), P.aeruginosa (MIC=7.5 ug/mL) and C.albicans (MIC=1.25 ug/mL). Also shows a weak hemolytic activity. In Amolops loloensis (Lolokou Sucker Frog), this protein is Temporin-ALg.